The sequence spans 356 residues: Guanine nucleotide-binding protein alpha-3 subunit (356 aa).

Positions 1–26 are disordered; it reads MGACMSKNDEETEQKKRSQKIDRDLE. The N-myristoyl glycine moiety is linked to residue glycine 2. Residue cysteine 4 is the site of S-palmitoyl cysteine attachment. The span at 7–23 shows a compositional bias: basic and acidic residues; that stretch reads KNDEETEQKKRSQKIDR. In terms of domain architecture, G-alpha spans 34–356; it reads KECKILLLGS…NNALKDSGIL (323 aa). The tract at residues 37 to 50 is G1 motif; it reads KILLLGSGESGKST. GTP-binding positions include 42 to 49, 179 to 185, 204 to 208, 273 to 276, and alanine 328; these read GSGESGKS, LRARTKT, DVGGQ, and NKVD. The Mg(2+) site is built by serine 49 and threonine 185. A G2 motif region spans residues 177–185; sequence DVLRARTKT. The interval 200-209 is G3 motif; that stretch reads IHMFDVGGQR. Positions 269–276 are G4 motif; it reads ILFLNKVD. A G5 motif region spans residues 326–331; sequence TQATDT.

It belongs to the G-alpha family. G(q) subfamily. G proteins are composed of 3 units; alpha, beta and gamma. The alpha chain contains the guanine nucleotide binding site.

Functionally, guanine nucleotide-binding proteins (G proteins) are involved as modulators or transducers in various transmembrane signaling systems. Involved in conidiation. The protein is Guanine nucleotide-binding protein alpha-3 subunit (gna-3) of Neurospora crassa (strain ATCC 24698 / 74-OR23-1A / CBS 708.71 / DSM 1257 / FGSC 987).